Consider the following 170-residue polypeptide: Two-component response regulator ORR6 (170 aa).

Residues 51 to 170 (HVLAVDDSSV…DVSRLCSRIR (120 aa)) form the Response regulatory domain. A 4-aspartylphosphate modification is found at Asp-103.

Belongs to the ARR family. Type-A subfamily. Two-component system major event consists of a His-to-Asp phosphorelay between a sensor histidine kinase (HK) and a response regulator (RR). In plants, the His-to-Asp phosphorelay involves an additional intermediate named Histidine-containing phosphotransfer protein (HPt). This multistep phosphorelay consists of a His-Asp-His-Asp sequential transfer of a phosphate group between first a His and an Asp of the HK protein, followed by the transfer to a conserved His of the HPt protein and finally the transfer to an Asp in the receiver domain of the RR protein. In terms of tissue distribution, expressed in roots, leaf blades, leaf sheaths, shoot apex, flowers and panicles.

Functionally, functions as a response regulator involved in His-to-Asp phosphorelay signal transduction system. Phosphorylation of the Asp residue in the receiver domain activates the ability of the protein to promote the transcription of target genes. Type-A response regulators seem to act as negative regulators of the cytokinin signaling. The protein is Two-component response regulator ORR6 of Oryza sativa subsp. japonica (Rice).